Consider the following 235-residue polypeptide: NADH-quinone oxidoreductase subunit C (235 aa).

Belongs to the complex I 30 kDa subunit family. In terms of assembly, NDH-1 is composed of 14 different subunits. Subunits NuoB, C, D, E, F, and G constitute the peripheral sector of the complex.

The protein resides in the cell membrane. It carries out the reaction a quinone + NADH + 5 H(+)(in) = a quinol + NAD(+) + 4 H(+)(out). NDH-1 shuttles electrons from NADH, via FMN and iron-sulfur (Fe-S) centers, to quinones in the respiratory chain. The immediate electron acceptor for the enzyme in this species is believed to be a menaquinone. Couples the redox reaction to proton translocation (for every two electrons transferred, four hydrogen ions are translocated across the cytoplasmic membrane), and thus conserves the redox energy in a proton gradient. The sequence is that of NADH-quinone oxidoreductase subunit C from Mycolicibacterium paratuberculosis (strain ATCC BAA-968 / K-10) (Mycobacterium paratuberculosis).